The primary structure comprises 363 residues: Ribosomal RNA large subunit methyltransferase M (363 aa).

Residues serine 187, 220-223, aspartate 239, aspartate 259, and aspartate 276 each bind S-adenosyl-L-methionine; that span reads CPGG. Lysine 305 acts as the Proton acceptor in catalysis.

The protein belongs to the class I-like SAM-binding methyltransferase superfamily. RNA methyltransferase RlmE family. RlmM subfamily. Monomer.

It is found in the cytoplasm. It carries out the reaction cytidine(2498) in 23S rRNA + S-adenosyl-L-methionine = 2'-O-methylcytidine(2498) in 23S rRNA + S-adenosyl-L-homocysteine + H(+). Catalyzes the 2'-O-methylation at nucleotide C2498 in 23S rRNA. This Shewanella loihica (strain ATCC BAA-1088 / PV-4) protein is Ribosomal RNA large subunit methyltransferase M.